The chain runs to 61 residues: Large ribosomal subunit protein uL29 (61 aa).

Belongs to the universal ribosomal protein uL29 family.

This chain is Large ribosomal subunit protein uL29, found in Campylobacter curvus (strain 525.92).